The primary structure comprises 884 residues: Coatomer subunit gamma-1 (884 aa).

5 HEAT repeats span residues 65–100 (VEATEVFFAVTKLFQSKDAGLRRLVYLMIKELSPSS), 101–138 (DEVIIVTSSLMKDMNSKTDMYRANAIRVLCRIIDGTLL), 286–323 (RELAPAITVLQLFLSSSKPVLRFAAVRTLNKVAMTRPL), 325–357 (VTNCNVDLESLMSDQNRSIATLAITTLLKTGNE), and 358–395 (SSVDRLMKQITNFMSDIADEFKIVVVEAIRSLCLKFPL). A disordered region spans residues 592–612 (QPLQEKKAPGKKPPAGAPAPA). Over residues 602–612 (KKPPAGAPAPA) the composition is skewed to pro residues.

It belongs to the COPG family. Oligomeric complex that consists of at least the alpha, beta, beta', gamma, delta, epsilon and zeta subunits.

The protein resides in the cytoplasm. It is found in the golgi apparatus membrane. It localises to the cytoplasmic vesicle. Its subcellular location is the COPI-coated vesicle membrane. The coatomer is a cytosolic protein complex that binds to dilysine motifs and reversibly associates with Golgi non-clathrin-coated vesicles, which further mediate biosynthetic protein transport from the ER, via the Golgi up to the trans Golgi network. Coatomer complex is required for budding from Golgi membranes, and is essential for the retrograde Golgi-to-ER transport of dilysine-tagged proteins. This chain is Coatomer subunit gamma-1, found in Oryza sativa subsp. japonica (Rice).